Reading from the N-terminus, the 342-residue chain is Holliday junction branch migration complex subunit RuvB (342 aa).

The segment at 1-182 (MRIEALNTAP…FGINSRLDYY (182 aa)) is large ATPase domain (RuvB-L). Residues isoleucine 21, arginine 22, glycine 63, lysine 66, threonine 67, threonine 68, 129-131 (EDY), arginine 172, tyrosine 182, and arginine 219 each bind ATP. Mg(2+) is bound at residue threonine 67. The interval 183–253 (SPELLQSIIV…VARRTLESLE (71 aa)) is small ATPAse domain (RuvB-S). A head domain (RuvB-H) region spans residues 256–342 (EGGLDDMDKK…DHGPLFDHNS (87 aa)). Positions 311 and 316 each coordinate DNA.

The protein belongs to the RuvB family. In terms of assembly, homohexamer. Forms an RuvA(8)-RuvB(12)-Holliday junction (HJ) complex. HJ DNA is sandwiched between 2 RuvA tetramers; dsDNA enters through RuvA and exits via RuvB. An RuvB hexamer assembles on each DNA strand where it exits the tetramer. Each RuvB hexamer is contacted by two RuvA subunits (via domain III) on 2 adjacent RuvB subunits; this complex drives branch migration. In the full resolvosome a probable DNA-RuvA(4)-RuvB(12)-RuvC(2) complex forms which resolves the HJ.

It localises to the cytoplasm. It carries out the reaction ATP + H2O = ADP + phosphate + H(+). Its function is as follows. The RuvA-RuvB-RuvC complex processes Holliday junction (HJ) DNA during genetic recombination and DNA repair, while the RuvA-RuvB complex plays an important role in the rescue of blocked DNA replication forks via replication fork reversal (RFR). RuvA specifically binds to HJ cruciform DNA, conferring on it an open structure. The RuvB hexamer acts as an ATP-dependent pump, pulling dsDNA into and through the RuvAB complex. RuvB forms 2 homohexamers on either side of HJ DNA bound by 1 or 2 RuvA tetramers; 4 subunits per hexamer contact DNA at a time. Coordinated motions by a converter formed by DNA-disengaged RuvB subunits stimulates ATP hydrolysis and nucleotide exchange. Immobilization of the converter enables RuvB to convert the ATP-contained energy into a lever motion, pulling 2 nucleotides of DNA out of the RuvA tetramer per ATP hydrolyzed, thus driving DNA branch migration. The RuvB motors rotate together with the DNA substrate, which together with the progressing nucleotide cycle form the mechanistic basis for DNA recombination by continuous HJ branch migration. Branch migration allows RuvC to scan DNA until it finds its consensus sequence, where it cleaves and resolves cruciform DNA. In Chlorobaculum parvum (strain DSM 263 / NCIMB 8327) (Chlorobium vibrioforme subsp. thiosulfatophilum), this protein is Holliday junction branch migration complex subunit RuvB.